A 791-amino-acid chain; its full sequence is MTEMTTPLSPRELDLMNAYWRAANYLSVGQIYLMDNPLLKEPLSKEHIKPRLLGHWGTTPGLNFLYVHLNRIIRNRDLDIIYIAGPGHGGPALVANVWLEGTYSEYYPDVSFDEAGMKRLFRQFSFPGGIPSHVAPATPGSIHEGGELGYALSHAYGAVFDNPDLVAACVIGDGEAETGPLATAWHSNKFLNPKRDGAVLPVLHLNGYKIANPTVLARISHEELEQLMIGYGYKPYFVEGDDPATMHQMMAATMDRCFDEIAEIQRRARVDGVTERPMWPMIVFRSPKGWTGPKVVDGKPAEGSWRSHQVPFSTVRDNPEHMALLETWLKSYRAEELFTADGVLLPELQELAPRGKKRMGDIPHANGGLLLKELRMPDFREYGIDVPKPGSVEAEAPKPMARFLRDIMKMNEKAANFRVFGPDETASNRLGELFEETDRTWMAGMLPTDDHLSRDGRVMEILSEHTCQGWLEGYLLTGRHGFFSCYEAFIHIIDSMFNQHAKWLKVTGAEIPWRRPIASLNYFLTSHVWRQDHNGFSHQDPGFIDHVVNKKSSVIRVYLPPDANSLLSVTNHCLRSRNYINVIVAGKQPAWQWLDMESAVRHCTSGIGIWEWASNDANEGEPDVVMACAGDVPTLETLAAVKILRKLAPELKIRVVNVVDLMTLQPKEEHPHGLADRDFDDMFTTDKPIIFAYHGYPWLIHRLTYRRTNHHNLHVRGYKEEGTTTTPFDMVVMNELDRFHLVADVANRVESLRPQAAYIKQYVRDRLIEHKEYITKYGEDMPEVRDWRWED.

The protein belongs to the XFP family. The cofactor is thiamine diphosphate.

The chain is Probable phosphoketolase from Chlorobaculum tepidum (strain ATCC 49652 / DSM 12025 / NBRC 103806 / TLS) (Chlorobium tepidum).